We begin with the raw amino-acid sequence, 276 residues long: Protein SCO1 homolog 2, mitochondrial (276 aa).

A mitochondrion-targeting transit peptide spans 1 to 14; the sequence is MLPCRRLVLSCKNQ. The chain crosses the membrane as a helical span at residues 66 to 82; sequence YAVPAILLGFAGFVGFL. In terms of domain architecture, Thioredoxin spans 110 to 273; the sequence is VKGPIIGGPF…SQELLKEVAS (164 aa).

It belongs to the SCO1/2 family. As to expression, expressed in the whole plant with highest expression in imbibed seeds and embryos, and the root hair zone.

The protein localises to the mitochondrion inner membrane. In terms of biological role, thought to play a role in cellular copper homeostasis, mitochondrial redox signaling or insertion of copper into the active site of COX. Participates in copper and redox homeostasis. The polypeptide is Protein SCO1 homolog 2, mitochondrial (HCC2) (Arabidopsis thaliana (Mouse-ear cress)).